A 1047-amino-acid chain; its full sequence is Isoleucine--tRNA ligase (1047 aa).

The 'HIGH' region motif lies at 52–62 (PTANGMPGAHH). Positions 600–604 (KMSKH) match the 'KMSKS' region motif. Lys603 contacts ATP.

The protein belongs to the class-I aminoacyl-tRNA synthetase family. IleS type 2 subfamily. In terms of assembly, monomer. Zn(2+) is required as a cofactor.

The protein resides in the cytoplasm. The enzyme catalyses tRNA(Ile) + L-isoleucine + ATP = L-isoleucyl-tRNA(Ile) + AMP + diphosphate. Functionally, catalyzes the attachment of isoleucine to tRNA(Ile). As IleRS can inadvertently accommodate and process structurally similar amino acids such as valine, to avoid such errors it has two additional distinct tRNA(Ile)-dependent editing activities. One activity is designated as 'pretransfer' editing and involves the hydrolysis of activated Val-AMP. The other activity is designated 'posttransfer' editing and involves deacylation of mischarged Val-tRNA(Ile). This is Isoleucine--tRNA ligase from Streptomyces coelicolor (strain ATCC BAA-471 / A3(2) / M145).